Consider the following 391-residue polypeptide: Imidazolonepropionase (391 aa).

The Fe(3+) site is built by His72 and His74. The Zn(2+) site is built by His72 and His74. 3 residues coordinate 4-imidazolone-5-propanoate: Arg81, Tyr139, and His166. Tyr139 provides a ligand contact to N-formimidoyl-L-glutamate. Fe(3+) is bound at residue His229. His229 contributes to the Zn(2+) binding site. Gln232 is a 4-imidazolone-5-propanoate binding site. Residue Asp303 coordinates Fe(3+). Asp303 provides a ligand contact to Zn(2+). Asn305 and Gly307 together coordinate N-formimidoyl-L-glutamate. Ser308 lines the 4-imidazolone-5-propanoate pocket.

This sequence belongs to the metallo-dependent hydrolases superfamily. HutI family. It depends on Zn(2+) as a cofactor. Fe(3+) is required as a cofactor.

Its subcellular location is the cytoplasm. It catalyses the reaction 4-imidazolone-5-propanoate + H2O = N-formimidoyl-L-glutamate. It participates in amino-acid degradation; L-histidine degradation into L-glutamate; N-formimidoyl-L-glutamate from L-histidine: step 3/3. In terms of biological role, catalyzes the hydrolytic cleavage of the carbon-nitrogen bond in imidazolone-5-propanoate to yield N-formimidoyl-L-glutamate. It is the third step in the universal histidine degradation pathway. This chain is Imidazolonepropionase, found in Streptomyces coelicolor (strain ATCC BAA-471 / A3(2) / M145).